We begin with the raw amino-acid sequence, 483 residues long: ATP synthase subunit beta (483 aa).

169-176 (GGAGVGKT) is an ATP binding site.

Belongs to the ATPase alpha/beta chains family. In terms of assembly, F-type ATPases have 2 components, CF(1) - the catalytic core - and CF(0) - the membrane proton channel. CF(1) has five subunits: alpha(3), beta(3), gamma(1), delta(1), epsilon(1). CF(0) has three main subunits: a(1), b(2) and c(9-12). The alpha and beta chains form an alternating ring which encloses part of the gamma chain. CF(1) is attached to CF(0) by a central stalk formed by the gamma and epsilon chains, while a peripheral stalk is formed by the delta and b chains.

Its subcellular location is the cell membrane. It carries out the reaction ATP + H2O + 4 H(+)(in) = ADP + phosphate + 5 H(+)(out). Functionally, produces ATP from ADP in the presence of a proton gradient across the membrane. The catalytic sites are hosted primarily by the beta subunits. The polypeptide is ATP synthase subunit beta (Rhodococcus erythropolis (strain PR4 / NBRC 100887)).